The primary structure comprises 561 residues: DNA ligase B (561 aa).

Lys125 acts as the N6-AMP-lysine intermediate in catalysis.

Belongs to the NAD-dependent DNA ligase family. LigB subfamily.

The enzyme catalyses NAD(+) + (deoxyribonucleotide)n-3'-hydroxyl + 5'-phospho-(deoxyribonucleotide)m = (deoxyribonucleotide)n+m + AMP + beta-nicotinamide D-nucleotide.. Catalyzes the formation of phosphodiester linkages between 5'-phosphoryl and 3'-hydroxyl groups in double-stranded DNA using NAD as a coenzyme and as the energy source for the reaction. The sequence is that of DNA ligase B from Salmonella enteritidis PT4 (strain P125109).